The sequence spans 29 residues: Augerpeptide hheTx2 (29 aa).

Post-translationally, contains 4 disulfide bonds. In terms of tissue distribution, expressed by the venom duct.

Its subcellular location is the secreted. This is Augerpeptide hheTx2 from Hastula hectica (Sea snail).